We begin with the raw amino-acid sequence, 264 residues long: MKKLKLHGFNNLTKSLSFCIYDICYAKTTEERDGYIAYIDELYNANRLTEILSETCSIIGANILNIARQDYEPQGASVTILVSEEPVDPKLIDKTEHPGPLPETVVAHLDKSHICVHTYPESHPEGGLCTFRADIEVSTCGVISPLKALNYLIHQLESDIVTIDYRVRGFTRDINGMKHFIDHEINSIQNFMSDDMKALYDMVDVNVYQENIFHTKMLLKEFDLKHYMFHTKPEDLTDSERQEITAALWKEMREIYYGRNMPAV.

Residue S112 is the Schiff-base intermediate with substrate; via pyruvic acid of the active site. At S112 the chain carries Pyruvic acid (Ser); by autocatalysis. Catalysis depends on H117, which acts as the Proton acceptor; for processing activity. The Proton donor; for catalytic activity role is filled by C140.

The protein belongs to the prokaryotic AdoMetDC family. Type 2 subfamily. Heterooctamer of four alpha and four beta chains arranged as a tetramer of alpha/beta heterodimers. The cofactor is pyruvate. In terms of processing, is synthesized initially as an inactive proenzyme. Formation of the active enzyme involves a self-maturation process in which the active site pyruvoyl group is generated from an internal serine residue via an autocatalytic post-translational modification. Two non-identical subunits are generated from the proenzyme in this reaction, and the pyruvate is formed at the N-terminus of the alpha chain, which is derived from the carboxyl end of the proenzyme. The post-translation cleavage follows an unusual pathway, termed non-hydrolytic serinolysis, in which the side chain hydroxyl group of the serine supplies its oxygen atom to form the C-terminus of the beta chain, while the remainder of the serine residue undergoes an oxidative deamination to produce ammonia and the pyruvoyl group blocking the N-terminus of the alpha chain.

It carries out the reaction S-adenosyl-L-methionine + H(+) = S-adenosyl 3-(methylsulfanyl)propylamine + CO2. It functions in the pathway amine and polyamine biosynthesis; S-adenosylmethioninamine biosynthesis; S-adenosylmethioninamine from S-adenosyl-L-methionine: step 1/1. In terms of biological role, catalyzes the decarboxylation of S-adenosylmethionine to S-adenosylmethioninamine (dcAdoMet), the propylamine donor required for the synthesis of the polyamines spermine and spermidine from the diamine putrescine. The protein is S-adenosylmethionine decarboxylase proenzyme of Escherichia coli O127:H6 (strain E2348/69 / EPEC).